A 362-amino-acid polypeptide reads, in one-letter code: NAD(P)H-quinone oxidoreductase subunit 1, chloroplastic (362 aa).

8 helical membrane passes run 29-49 (ILPILTLLLGITIEVLVIVWL), 103-123 (IAVISILLSFLVIPLGYHFVL), 128-148 (IGVFLWIAISSIAPIGLLMAG), 164-184 (AAQSISYEIPLTFCVLAISLL), 202-222 (FFGWNIWRQPIGFLVFLISSL), 247-267 (YSGIKYGLFYLVSYLNLLVSS), 303-323 (TIGIFITLTKAYLFLFISITI), and 335-355 (LLNLGWKFLLPISLGNLLLTT).

This sequence belongs to the complex I subunit 1 family. As to quaternary structure, NDH is composed of at least 16 different subunits, 5 of which are encoded in the nucleus.

Its subcellular location is the plastid. It localises to the chloroplast thylakoid membrane. The catalysed reaction is a plastoquinone + NADH + (n+1) H(+)(in) = a plastoquinol + NAD(+) + n H(+)(out). The enzyme catalyses a plastoquinone + NADPH + (n+1) H(+)(in) = a plastoquinol + NADP(+) + n H(+)(out). In terms of biological role, NDH shuttles electrons from NAD(P)H:plastoquinone, via FMN and iron-sulfur (Fe-S) centers, to quinones in the photosynthetic chain and possibly in a chloroplast respiratory chain. The immediate electron acceptor for the enzyme in this species is believed to be plastoquinone. Couples the redox reaction to proton translocation, and thus conserves the redox energy in a proton gradient. This Agrostis stolonifera (Creeping bentgrass) protein is NAD(P)H-quinone oxidoreductase subunit 1, chloroplastic.